The chain runs to 479 residues: F-box/LRR-repeat protein 16 (479 aa).

Residues 1–92 (MSSPGIDGDP…GPVSGPPVER (92 aa)) form a disordered region. The segment covering 47–60 (CQPPPPPTLPPPSL) has biased composition (pro residues). Arginine 92 is subject to Omega-N-methylarginine. Residues 94 to 139 (PLATDEKILNGLFWYFSACEKCILAQVCKAWRRVLYQPKFWAGLTP) enclose the F-box domain. LRR repeat units follow at residues 321–342 (NLTSLSLSGCSKVTDDGVELVA), 347–369 (KLRSLDLSWCPRITDMALEYVAC), 373–394 (RLEELVLDRCVRITDTGLSYLS), 398–419 (SLRSLYLRWCCQVQDFGLKHLL), 423–444 (NLRLLSLAGCPLLTTTGLSGLV), and 446–470 (LQELEELELTNCPGATPELFKYFSQ).

In terms of assembly, interacts with SKP1 and CUL1.

Functionally, substrate-recognition component of the SCF (SKP1-CUL1-F-box protein)-type E3 ubiquitin ligase complex. In Mus musculus (Mouse), this protein is F-box/LRR-repeat protein 16 (Fbxl16).